A 417-amino-acid polypeptide reads, in one-letter code: Transmembrane protease serine 11D (417 aa).

Over Met-1–Phe-17 the chain is Cytoplasmic. Residues Met-18–Ile-38 traverse the membrane as a helical; Signal-anchor for type II membrane protein segment. Over His-39–Ile-417 the chain is Extracellular. In terms of domain architecture, SEA spans Arg-46–Gln-162. 4 disulfides stabilise this stretch: Cys-172–Cys-291, Cys-211–Cys-227, Cys-336–Cys-352, and Cys-363–Cys-392. The Peptidase S1 domain maps to Ile-186–Gly-416. Catalysis depends on charge relay system residues His-226 and Asp-271. Ser-367 functions as the Charge relay system in the catalytic mechanism.

This sequence belongs to the peptidase S1 family. Monomer. In terms of tissue distribution, isoform 1 and isoform 2 are expressed in the esophagus, tongue and trachea. Isoform 2 is also highly expressed in the adrenal cortex and heart.

The protein resides in the cell membrane. It is found in the secreted. Its function is as follows. May play some biological role in the host defense system on the mucous membrane independently of or in cooperation with other substances in airway mucous or bronchial secretions. Plays a role in the proteolytic processing of ACE2. Preferentially cleaves the C-terminal side of arginine residues at the P1 position of certain peptides. Isoform 2 may play a key role in regulating adrenal proliferation by specifically cleaving N-POMC. This is Transmembrane protease serine 11D (Tmprss11d) from Rattus norvegicus (Rat).